Here is a 72-residue protein sequence, read N- to C-terminus: Translation initiation factor IF-1 (72 aa).

The 72-residue stretch at 1–72 folds into the S1-like domain; it reads MAKEEAIEIE…SKGRITYRYK (72 aa).

This sequence belongs to the IF-1 family. In terms of assembly, component of the 30S ribosomal translation pre-initiation complex which assembles on the 30S ribosome in the order IF-2 and IF-3, IF-1 and N-formylmethionyl-tRNA(fMet); mRNA recruitment can occur at any time during PIC assembly.

The protein resides in the cytoplasm. Its function is as follows. One of the essential components for the initiation of protein synthesis. Stabilizes the binding of IF-2 and IF-3 on the 30S subunit to which N-formylmethionyl-tRNA(fMet) subsequently binds. Helps modulate mRNA selection, yielding the 30S pre-initiation complex (PIC). Upon addition of the 50S ribosomal subunit IF-1, IF-2 and IF-3 are released leaving the mature 70S translation initiation complex. This Chlorobium luteolum (strain DSM 273 / BCRC 81028 / 2530) (Pelodictyon luteolum) protein is Translation initiation factor IF-1.